The primary structure comprises 399 residues: CCA-adding enzyme (399 aa).

Residues G32 and R35 each coordinate ATP. 2 residues coordinate CTP: G32 and R35. Mg(2+) contacts are provided by D45 and D47. Positions 116, 159, 162, 165, and 168 each coordinate ATP. The CTP site is built by R116, D159, R162, R165, and R168.

Belongs to the tRNA nucleotidyltransferase/poly(A) polymerase family. Bacterial CCA-adding enzyme type 3 subfamily. In terms of assembly, homodimer. Requires Mg(2+) as cofactor.

It catalyses the reaction a tRNA precursor + 2 CTP + ATP = a tRNA with a 3' CCA end + 3 diphosphate. The catalysed reaction is a tRNA with a 3' CCA end + 2 CTP + ATP = a tRNA with a 3' CCACCA end + 3 diphosphate. Functionally, catalyzes the addition and repair of the essential 3'-terminal CCA sequence in tRNAs without using a nucleic acid template. Adds these three nucleotides in the order of C, C, and A to the tRNA nucleotide-73, using CTP and ATP as substrates and producing inorganic pyrophosphate. tRNA 3'-terminal CCA addition is required both for tRNA processing and repair. Also involved in tRNA surveillance by mediating tandem CCA addition to generate a CCACCA at the 3' terminus of unstable tRNAs. While stable tRNAs receive only 3'-terminal CCA, unstable tRNAs are marked with CCACCA and rapidly degraded. The polypeptide is CCA-adding enzyme (Streptococcus pneumoniae serotype 19F (strain G54)).